The primary structure comprises 429 residues: Glutamate-1-semialdehyde 2,1-aminomutase (429 aa).

At Lys267 the chain carries N6-(pyridoxal phosphate)lysine.

Belongs to the class-III pyridoxal-phosphate-dependent aminotransferase family. HemL subfamily. Homodimer. Pyridoxal 5'-phosphate is required as a cofactor.

Its subcellular location is the cytoplasm. It carries out the reaction (S)-4-amino-5-oxopentanoate = 5-aminolevulinate. The protein operates within porphyrin-containing compound metabolism; protoporphyrin-IX biosynthesis; 5-aminolevulinate from L-glutamyl-tRNA(Glu): step 2/2. The sequence is that of Glutamate-1-semialdehyde 2,1-aminomutase from Anaeromyxobacter sp. (strain Fw109-5).